The primary structure comprises 304 residues: Secreted mono- and diacylglycerol lipase LIP1 (304 aa).

Positions 1-19 (MLFSRFVLLAFGSVAAVSA) are cleaved as a signal peptide. Thr32 is a glycosylation site (O-linked (Man...) threonine). A disulfide bond links Cys57 and Cys297. Residue Ser171 is the Nucleophile of the active site. Residue Asp228 is part of the active site. Asn253 carries N-linked (GlcNAc...) asparagine glycosylation. His281 is an active-site residue.

Belongs to the AB hydrolase superfamily. Lipase family. Class 3 subfamily.

Its subcellular location is the secreted. It localises to the cell wall. The enzyme catalyses a monoacylglycerol + H2O = glycerol + a fatty acid + H(+). It carries out the reaction a diacylglycerol + H2O = a monoacylglycerol + a fatty acid + H(+). RHC 80267, a well-known inhibitor of diacylglycerol lipases from mammals, also acts as an inhibitor for LIP1/SMG1. Functionally, secreted lipase involved in Dandruff and seborrheic dermatitis (D/SD) probably via lipase-mediated breakdown of sebaceous lipids and release of irritating free fatty acids. Shows activity against monoglyceride and diglyceride substrates, but not triglyceride substrates and does not exhibit regio-selective production of diacylglycerols. Able to hydrolyze diacylglycerols such as distearin, dilinolein, dipalmitoylglycerol and dipalmitolein. Cleaves oleic acid from 1,2 isomers of diolein on both the 1 and the 2 position of the glycerol backbone, resulting mainly in free fatty acids but no monoolein is detected. Shows activity on monoolein and liberates mostly free fatty acids, but can also perform the reverse reaction and produce diolein. This Malassezia globosa (strain ATCC MYA-4612 / CBS 7966) (Dandruff-associated fungus) protein is Secreted mono- and diacylglycerol lipase LIP1.